The following is a 190-amino-acid chain: GTP cyclohydrolase 1 (190 aa).

Zn(2+) is bound by residues C75, H78, and C146.

The protein belongs to the GTP cyclohydrolase I family. In terms of assembly, homomer.

It carries out the reaction GTP + H2O = 7,8-dihydroneopterin 3'-triphosphate + formate + H(+). It functions in the pathway cofactor biosynthesis; 7,8-dihydroneopterin triphosphate biosynthesis; 7,8-dihydroneopterin triphosphate from GTP: step 1/1. The sequence is that of GTP cyclohydrolase 1 from Campylobacter lari (strain RM2100 / D67 / ATCC BAA-1060).